The primary structure comprises 33 residues: Photosystem II reaction center protein Psb30 (33 aa).

The helical transmembrane segment at 5-25 (VVAQLTVLALIVVSGPLVIGL) threads the bilayer.

It belongs to the Psb30/Ycf12 family. In terms of assembly, PSII is composed of 1 copy each of membrane proteins PsbA, PsbB, PsbC, PsbD, PsbE, PsbF, PsbH, PsbI, PsbJ, PsbK, PsbL, PsbM, PsbT, PsbX, PsbY, PsbZ, Psb30/Ycf12, peripheral proteins of the oxygen-evolving complex and a large number of cofactors. It forms dimeric complexes.

The protein localises to the plastid. It localises to the chloroplast thylakoid membrane. Its function is as follows. A core subunit of photosystem II (PSII), probably helps stabilize the reaction center. The sequence is that of Photosystem II reaction center protein Psb30 from Zygnema circumcarinatum (Green alga).